A 624-amino-acid polypeptide reads, in one-letter code: Protein FAM234B (624 aa).

Positions 1–91 (MATVLSRALK…GFPSEPLGGL (91 aa)) are disordered. Serine 16 carries the phosphoserine modification. A Phosphothreonine modification is found at threonine 26. Phosphoserine occurs at positions 30, 33, and 63. A helical membrane pass occupies residues 107-127 (VFLLTLVISMVLVLLCAFLIP).

The protein belongs to the FAM234 family.

It is found in the membrane. Its subcellular location is the golgi outpost. It localises to the cytoplasm. The protein resides in the cytoskeleton. The protein localises to the microtubule organizing center. The polypeptide is Protein FAM234B (Mus musculus (Mouse)).